The sequence spans 550 residues: Hydroxylamine reductase (550 aa).

[2Fe-2S] cluster is bound by residues Cys-3, Cys-6, Cys-18, and Cys-25. Hybrid [4Fe-2O-2S] cluster-binding residues include His-249, Glu-273, Cys-317, Cys-405, Cys-433, Cys-458, Glu-492, and Lys-494. Cys-405 is subject to Cysteine persulfide.

This sequence belongs to the HCP family. The cofactor is [2Fe-2S] cluster. It depends on hybrid [4Fe-2O-2S] cluster as a cofactor.

Its subcellular location is the cytoplasm. The enzyme catalyses A + NH4(+) + H2O = hydroxylamine + AH2 + H(+). Functionally, catalyzes the reduction of hydroxylamine to form NH(3) and H(2)O. This Pectobacterium carotovorum subsp. carotovorum (strain PC1) protein is Hydroxylamine reductase.